A 153-amino-acid chain; its full sequence is 6,7-dimethyl-8-ribityllumazine synthase (153 aa).

5-amino-6-(D-ribitylamino)uracil contacts are provided by residues Phe22, 56-58 (AFE), and 80-82 (AVI). 85–86 (GT) is a binding site for (2S)-2-hydroxy-3-oxobutyl phosphate. The Proton donor role is filled by His88. Position 113 (Phe113) interacts with 5-amino-6-(D-ribitylamino)uracil. Arg127 is a binding site for (2S)-2-hydroxy-3-oxobutyl phosphate.

This sequence belongs to the DMRL synthase family. Forms an icosahedral capsid composed of 60 subunits, arranged as a dodecamer of pentamers.

It catalyses the reaction (2S)-2-hydroxy-3-oxobutyl phosphate + 5-amino-6-(D-ribitylamino)uracil = 6,7-dimethyl-8-(1-D-ribityl)lumazine + phosphate + 2 H2O + H(+). Its pathway is cofactor biosynthesis; riboflavin biosynthesis; riboflavin from 2-hydroxy-3-oxobutyl phosphate and 5-amino-6-(D-ribitylamino)uracil: step 1/2. Its function is as follows. Catalyzes the formation of 6,7-dimethyl-8-ribityllumazine by condensation of 5-amino-6-(D-ribitylamino)uracil with 3,4-dihydroxy-2-butanone 4-phosphate. This is the penultimate step in the biosynthesis of riboflavin. This chain is 6,7-dimethyl-8-ribityllumazine synthase, found in Hydrogenovibrio crunogenus (strain DSM 25203 / XCL-2) (Thiomicrospira crunogena).